Consider the following 534-residue polypeptide: Thromboxane-A synthase (534 aa).

The Cytoplasmic portion of the chain corresponds to 1-10 (MEVLGFLSPE). Residues 11–31 (LNGPMVTMALAVVLLALLKWY) traverse the membrane as a helical segment. The Lumenal portion of the chain corresponds to 32–75 (STSAFSRLEKLGIRHPKPSPFIGNLTFFRQGFWESHMELRKQYG). A helical transmembrane segment spans residues 76–96 (PLSGYYLGRRMIVVISDPDMI). At 97–223 (KQVLAEKFSN…RRFFAFSVPR (127 aa)) the chain is on the cytoplasmic side. A helical membrane pass occupies residues 224 to 244 (LILVLILSFPSIMVPLARILP). The Lumenal portion of the chain corresponds to 245–336 (NKKRDEVNGF…LTVDEVVGQA (92 aa)). Residues 337–357 (FLFLIAGYEIITNTLSFVTYL) traverse the membrane as a helical segment. The Cytoplasmic portion of the chain corresponds to 358–534 (LATNPDCQEK…NGVYIRIVPR (177 aa)). Cysteine 480 serves as a coordination point for heme.

Belongs to the cytochrome P450 family. In terms of assembly, monomer. The cofactor is heme. Expressed in lung, kidney and thymus.

The protein resides in the endoplasmic reticulum membrane. It catalyses the reaction prostaglandin H2 = thromboxane A2. The catalysed reaction is prostaglandin H2 = (12S)-hydroxy-(5Z,8E,10E)-heptadecatrienoate + malonaldehyde. The enzyme catalyses a hydroperoxyeicosatetraenoate = an oxoeicosatetraenoate + H2O. It carries out the reaction (15S)-hydroperoxy-(5Z,8Z,11Z,13E)-eicosatetraenoate = 15-oxo-(5Z,8Z,11Z,13E)-eicosatetraenoate + H2O. It catalyses the reaction (15S)-hydroperoxy-(5Z,8Z,11Z,13E)-eicosatetraenoate + AH2 = (15S)-hydroxy-(5Z,8Z,11Z,13E)-eicosatetraenoate + A + H2O. Catalyzes the conversion of prostaglandin H2 (PGH2) to thromboxane A2 (TXA2), a potent inducer of blood vessel constriction and platelet aggregation. Also cleaves PGH2 to 12-hydroxy-heptadecatrienoicacid (12-HHT) and malondialdehyde, which is known to act as a mediator of DNA damage. 12-HHT and malondialdehyde are formed stoichiometrically in the same amounts as TXA2. Additionally, displays dehydratase activity, toward (15S)-hydroperoxy-(5Z,8Z,11Z,13E)-eicosatetraenoate (15(S)-HPETE) producing 15-KETE and 15-HETE. The protein is Thromboxane-A synthase (TBXAS1) of Sus scrofa (Pig).